A 169-amino-acid chain; its full sequence is Protein-export protein SecB (169 aa).

The protein belongs to the SecB family. As to quaternary structure, homotetramer, a dimer of dimers. One homotetramer interacts with 1 SecA dimer.

The protein resides in the cytoplasm. One of the proteins required for the normal export of preproteins out of the cell cytoplasm. It is a molecular chaperone that binds to a subset of precursor proteins, maintaining them in a translocation-competent state. It also specifically binds to its receptor SecA. This is Protein-export protein SecB from Pseudoalteromonas atlantica (strain T6c / ATCC BAA-1087).